The primary structure comprises 281 residues: 2,3,4,5-tetrahydropyridine-2,6-dicarboxylate N-succinyltransferase (281 aa).

This sequence belongs to the transferase hexapeptide repeat family.

It is found in the cytoplasm. It catalyses the reaction (S)-2,3,4,5-tetrahydrodipicolinate + succinyl-CoA + H2O = (S)-2-succinylamino-6-oxoheptanedioate + CoA. It functions in the pathway amino-acid biosynthesis; L-lysine biosynthesis via DAP pathway; LL-2,6-diaminopimelate from (S)-tetrahydrodipicolinate (succinylase route): step 1/3. The protein is 2,3,4,5-tetrahydropyridine-2,6-dicarboxylate N-succinyltransferase of Methylobacterium sp. (strain 4-46).